The primary structure comprises 981 residues: Lateral signaling target protein 2 homolog (981 aa).

A disordered region spans residues 308–462; that stretch reads PLGSSSIEAP…LESSDDDTDE (155 aa). Low complexity-rich tracts occupy residues 326–356, 369–380, 390–404, and 412–433; these read TTSS…TTNT, NNHNSNSNSSTN, SPSM…TPTA, and PSHS…PADW. Positions 434 to 462 are enriched in acidic residues; the sequence is SDGDDEDEDDDDIEVDEEDLESSDDDTDE. A phosphoserine mark is found at Ser544 and Ser545. Disordered stretches follow at residues 561 to 642 and 749 to 897; these read EQMQ…SSLS and DNVF…SPPA. The span at 576–611 shows a compositional bias: basic residues; it reads HSHRHHQRHHHHHHHRHSHQHRQPHPHRTTRSGRKR. Low complexity predominate over residues 630 to 642; it reads LASGDTSAASSLS. Positions 760–791 are enriched in polar residues; sequence ATGQRHSAGASMQRNNTIDLASQSGEGSPSGA. The residue at position 805 (Ser805) is a Phosphoserine. Low complexity-rich tracts occupy residues 811-866 and 883-896; these read AASS…PVSA and PSSA…LSPP. An FYVE-type zinc finger spans residues 901–961; sequence DGKAPRCMAC…VCRDCYVREV (61 aa). 8 residues coordinate Zn(2+): Cys907, Cys910, Cys923, Cys926, Cys931, Cys934, Cys953, and Cys956.

The protein belongs to the lst-2 family.

Functionally, negative regulator of epidermal growth factor receptor (EGFR) signaling. The sequence is that of Lateral signaling target protein 2 homolog from Drosophila erecta (Fruit fly).